The chain runs to 489 residues: Glycogen synthase (489 aa).

Lysine 15 serves as a coordination point for ADP-alpha-D-glucose.

The protein belongs to the glycosyltransferase 1 family. Bacterial/plant glycogen synthase subfamily.

It carries out the reaction [(1-&gt;4)-alpha-D-glucosyl](n) + ADP-alpha-D-glucose = [(1-&gt;4)-alpha-D-glucosyl](n+1) + ADP + H(+). Its pathway is glycan biosynthesis; glycogen biosynthesis. In terms of biological role, synthesizes alpha-1,4-glucan chains using ADP-glucose. This chain is Glycogen synthase, found in Francisella tularensis subsp. mediasiatica (strain FSC147).